The sequence spans 94 residues: Co-chaperonin GroES (94 aa).

Belongs to the GroES chaperonin family. As to quaternary structure, heptamer of 7 subunits arranged in a ring. Interacts with the chaperonin GroEL.

It localises to the cytoplasm. Together with the chaperonin GroEL, plays an essential role in assisting protein folding. The GroEL-GroES system forms a nano-cage that allows encapsulation of the non-native substrate proteins and provides a physical environment optimized to promote and accelerate protein folding. GroES binds to the apical surface of the GroEL ring, thereby capping the opening of the GroEL channel. The chain is Co-chaperonin GroES from Ligilactobacillus salivarius (strain UCC118) (Lactobacillus salivarius).